The following is a 152-amino-acid chain: UPF0266 membrane protein YobD (152 aa).

3 helical membrane passes run 6 to 26, 45 to 65, and 67 to 87; these read LVLI…QFIM, VDSV…VTSH, and AQMT…IFWI.

This sequence belongs to the UPF0266 family.

Its subcellular location is the cell inner membrane. The chain is UPF0266 membrane protein YobD from Salmonella agona (strain SL483).